A 345-amino-acid polypeptide reads, in one-letter code: uncharacterized protein (345 aa).

2 disordered regions span residues 1 to 24 (MGLE…ENRK) and 296 to 345 (MTAH…LNES). Positions 304-323 (SDYDNDDDTDGIINETDYEL) are enriched in acidic residues. Over residues 324 to 345 (DTSQSEFATLTTSSNKSILNES) the composition is skewed to polar residues.

This is an uncharacterized protein from Schizosaccharomyces pombe (strain 972 / ATCC 24843) (Fission yeast).